A 242-amino-acid chain; its full sequence is Orotidine 5'-phosphate decarboxylase (242 aa).

Residues aspartate 22, lysine 44, 71–80, threonine 130, arginine 190, glutamine 199, glycine 219, and arginine 220 contribute to the substrate site; that span reads DLKYHDIPNT. Lysine 73 functions as the Proton donor in the catalytic mechanism.

The protein belongs to the OMP decarboxylase family. Type 1 subfamily. In terms of assembly, homodimer.

The enzyme catalyses orotidine 5'-phosphate + H(+) = UMP + CO2. The protein operates within pyrimidine metabolism; UMP biosynthesis via de novo pathway; UMP from orotate: step 2/2. Catalyzes the decarboxylation of orotidine 5'-monophosphate (OMP) to uridine 5'-monophosphate (UMP). The chain is Orotidine 5'-phosphate decarboxylase from Laribacter hongkongensis (strain HLHK9).